The following is a 354-amino-acid chain: Protein-glutamate methylesterase/protein-glutamine glutaminase (354 aa).

One can recognise a Response regulatory domain in the interval 7-124; that stretch reads KVLCVDDSAL…REGMLEYTEM (118 aa). Asp-58 is subject to 4-aspartylphosphate. One can recognise a CheB-type methylesterase domain in the interval 156-348; sequence LLSSEKVIII…AALMKRAEAS (193 aa). Active-site residues include Ser-168, His-194, and Asp-290.

The protein belongs to the CheB family. In terms of processing, phosphorylated by CheA. Phosphorylation of the N-terminal regulatory domain activates the methylesterase activity.

The protein localises to the cytoplasm. It catalyses the reaction [protein]-L-glutamate 5-O-methyl ester + H2O = L-glutamyl-[protein] + methanol + H(+). The enzyme catalyses L-glutaminyl-[protein] + H2O = L-glutamyl-[protein] + NH4(+). Its function is as follows. Involved in chemotaxis. Part of a chemotaxis signal transduction system that modulates chemotaxis in response to various stimuli. Catalyzes the demethylation of specific methylglutamate residues introduced into the chemoreceptors (methyl-accepting chemotaxis proteins or MCP) by CheR. Also mediates the irreversible deamidation of specific glutamine residues to glutamic acid. The protein is Protein-glutamate methylesterase/protein-glutamine glutaminase of Chromohalobacter salexigens (strain ATCC BAA-138 / DSM 3043 / CIP 106854 / NCIMB 13768 / 1H11).